The sequence spans 278 residues: MSAISVGQAIILGVVEGLTEFLPISSTGHLKIAEGLMDIQVDDKAVVGFTAVIQVGAIAAVLVYFFADIRRFVTAWGRGLANPAARTNHDYTFTWWVIYATIPVVLVGLAAKPLIDGPLASLWVVAASLLAGSALMWFADQYGRHKRGEDDLSLPDAMIVGTSQILALLFPGFSRSGATISTGLIRDLDRVAATRLSFFLSIPALTGAGLYELKDAVGGGVSAAPLAVGTVVSFFVAYASIAWLLKFVARHNFNAFIIYRVAVAVLLAGLLAGGAINA.

7 consecutive transmembrane segments (helical) span residues Val-46–Phe-66, Tyr-91–Ala-111, Leu-119–Ala-139, Ser-153–Phe-173, Val-191–Tyr-211, Pro-225–Leu-245, and Phe-256–Ile-276.

The protein belongs to the UppP family.

The protein localises to the cell membrane. It carries out the reaction di-trans,octa-cis-undecaprenyl diphosphate + H2O = di-trans,octa-cis-undecaprenyl phosphate + phosphate + H(+). Functionally, catalyzes the dephosphorylation of undecaprenyl diphosphate (UPP). Confers resistance to bacitracin. The chain is Undecaprenyl-diphosphatase 1 from Frankia alni (strain DSM 45986 / CECT 9034 / ACN14a).